The sequence spans 273 residues: WIMGHMVNAIYQIDEFVNLGANSIETDVSFDDNANPEYTYHGIPCDCGRSCLKWENYNDFLKGLRSATTPGNSKYQSKLILVVFDLKTGSLYDNQASEAGKKLAKNLLKHYWNNGNNGGGAYIVLSIPDLNHYPLIKGFTDTLKQEGHPELLEKVGYDFSGNDAVGDVAKAYKKAGVSGHVWQSDGITNCLLRGLTRVKEAVANRDSGNGYINKVYYWTVDKRATTRDALDAGVDGVMTNYPDVIADVMNEAAYKNKVRLATYEDSPWVTFKK.

His-5 is a catalytic residue. 2 residues coordinate Mg(2+): Glu-25 and Asp-27. His-41 serves as the catalytic Nucleophile. 2 disulfide bridges follow: Cys-45–Cys-51 and Cys-47–Cys-190. Residue Asp-85 participates in Mg(2+) binding.

It belongs to the arthropod phospholipase D family. Class II subfamily. Mg(2+) serves as cofactor. As to expression, expressed by the venom gland.

The protein localises to the secreted. The catalysed reaction is an N-(acyl)-sphingosylphosphocholine = an N-(acyl)-sphingosyl-1,3-cyclic phosphate + choline. The enzyme catalyses an N-(acyl)-sphingosylphosphoethanolamine = an N-(acyl)-sphingosyl-1,3-cyclic phosphate + ethanolamine. It catalyses the reaction a 1-acyl-sn-glycero-3-phosphocholine = a 1-acyl-sn-glycero-2,3-cyclic phosphate + choline. It carries out the reaction a 1-acyl-sn-glycero-3-phosphoethanolamine = a 1-acyl-sn-glycero-2,3-cyclic phosphate + ethanolamine. Functionally, dermonecrotic toxins cleave the phosphodiester linkage between the phosphate and headgroup of certain phospholipids (sphingolipid and lysolipid substrates), forming an alcohol (often choline) and a cyclic phosphate. This toxin acts on sphingomyelin (SM). It may also act on ceramide phosphoethanolamine (CPE), lysophosphatidylcholine (LPC) and lysophosphatidylethanolamine (LPE), but not on lysophosphatidylserine (LPS), and lysophosphatidylglycerol (LPG). It acts by transphosphatidylation, releasing exclusively cyclic phosphate products as second products. Induces dermonecrosis, hemolysis, increased vascular permeability, edema, inflammatory response, and platelet aggregation. This chain is Dermonecrotic toxin LhSicTox-alphaIA2avi, found in Loxosceles hirsuta (Recluse spider).